The sequence spans 122 residues: uncharacterized protein (122 aa).

Disordered stretches follow at residues 1–30 (MGRE…DQPE) and 96–122 (FKSC…DAMG).

This is an uncharacterized protein from Homo sapiens (Human).